Consider the following 518-residue polypeptide: Cytokinin hydroxylase (518 aa).

The chain crosses the membrane as a helical span at residues 1-21 (MLLTILKSLLVIFVTTILRVL). Residue Cys464 participates in heme binding.

It belongs to the cytochrome P450 family. Heme serves as cofactor. Expressed in roots and flowers.

It localises to the membrane. It carries out the reaction N(6)-(dimethylallyl)adenosine 5'-phosphate + NADPH + O2 + H(+) = 9-ribosyl-trans-zeatin 5'-phosphate + NADP(+) + H2O. It catalyses the reaction N(6)-(dimethylallyl)adenosine 5'-diphosphate + NADPH + O2 + H(+) = 9-ribosyl-trans-zeatin 5'-diphosphate + NADP(+) + H2O. The enzyme catalyses N(6)-(dimethylallyl)adenosine 5'-triphosphate + NADPH + O2 + H(+) = 9-ribosyl-trans-zeatin 5'-triphosphate + NADP(+) + H2O. Its function is as follows. Cytokinin hydroxylase that catalyzes the biosynthesis of trans-zeatin via the isopentenyladenine riboside 5'-monophosphate (iPRMP)-dependent pathway. Can use isopentenyladenosine-5'-monophosphate, isopentenyladenosine-5'-diphosphate and isopentenyladenosine-5'-triphosphate as substrate. The sequence is that of Cytokinin hydroxylase (CYP735A1) from Arabidopsis thaliana (Mouse-ear cress).